Reading from the N-terminus, the 30-residue chain is GIFLDKLKNFGKDVAGILLKKASCALSGQC.

The cysteines at positions 24 and 30 are disulfide-linked.

In terms of tissue distribution, expressed by the skin glands.

Its subcellular location is the secreted. In terms of biological role, antimicrobial peptide. This chain is Brevinin-2Rj, found in Pelophylax ridibundus (Marsh frog).